The chain runs to 477 residues: Glycogen synthase (477 aa).

Lys-15 provides a ligand contact to ADP-alpha-D-glucose.

Belongs to the glycosyltransferase 1 family. Bacterial/plant glycogen synthase subfamily.

The enzyme catalyses [(1-&gt;4)-alpha-D-glucosyl](n) + ADP-alpha-D-glucose = [(1-&gt;4)-alpha-D-glucosyl](n+1) + ADP + H(+). It participates in glycan biosynthesis; glycogen biosynthesis. Functionally, synthesizes alpha-1,4-glucan chains using ADP-glucose. This chain is Glycogen synthase, found in Myxococcus xanthus (strain DK1622).